The primary structure comprises 398 residues: Transcription termination factor 1, mitochondrial (398 aa).

The transit peptide at 1–57 (MQSLSLGQTSISKGLNYLTIMAPGNLWHMRNNFLFGSRCWMTRFSAENIFKSVSFRL) directs the protein to the mitochondrion. Interaction with DNA regions lie at residues 169–170 (RS), 246–250 (QSTKR), 323–330 (AEKKFNDK), 354–357 (SIST), and 383–390 (SKKRYEAK).

It belongs to the mTERF family. As to quaternary structure, monomer. Post-translationally, phosphoprotein with mostly four phosphate groups. While the DNA-binding activity is unaffected by the phosphorylation state, only the phosphorylated form of the protein is active for termination activity. Functioning seems to be regulated by phosphorylation.

It localises to the mitochondrion. Its function is as follows. Transcription termination factor. Binds to a 28 bp region within the tRNA(Leu(uur)) gene at a position immediately adjacent to and downstream of the 16S rRNA gene; this region comprises a tridecamer sequence critical for directing accurate termination. Binds DNA along the major grove and promotes DNA bending and partial unwinding. Promotes base flipping. Transcription termination activity appears to be polarized with highest specificity for transcripts initiated on the light strand. The sequence is that of Transcription termination factor 1, mitochondrial (MTERF1) from Pongo abelii (Sumatran orangutan).